The following is a 276-amino-acid chain: Protein TabB (276 aa).

The protein belongs to the transferase hexapeptide repeat family. It depends on pyridoxal 5'-phosphate as a cofactor.

In Pseudomonas amygdali pv. tabaci (Pseudomonas syringae pv. tabaci), this protein is Protein TabB (tabB).